The sequence spans 285 residues: Ribosomal RNA small subunit methyltransferase H (285 aa).

Residues 34–36 (AGH), Asp-51, Phe-75, Asp-96, and His-103 each bind S-adenosyl-L-methionine. Residues 259-285 (LVPSEKEAAQNPRARSAKLRAAEKEAP) form a disordered region.

It belongs to the methyltransferase superfamily. RsmH family.

The protein resides in the cytoplasm. It carries out the reaction cytidine(1402) in 16S rRNA + S-adenosyl-L-methionine = N(4)-methylcytidine(1402) in 16S rRNA + S-adenosyl-L-homocysteine + H(+). In terms of biological role, specifically methylates the N4 position of cytidine in position 1402 (C1402) of 16S rRNA. The chain is Ribosomal RNA small subunit methyltransferase H from Thermus thermophilus (strain ATCC 27634 / DSM 579 / HB8).